Reading from the N-terminus, the 187-residue chain is Elongation factor P (187 aa).

This sequence belongs to the elongation factor P family.

Its subcellular location is the cytoplasm. The protein operates within protein biosynthesis; polypeptide chain elongation. In terms of biological role, involved in peptide bond synthesis. Stimulates efficient translation and peptide-bond synthesis on native or reconstituted 70S ribosomes in vitro. Probably functions indirectly by altering the affinity of the ribosome for aminoacyl-tRNA, thus increasing their reactivity as acceptors for peptidyl transferase. The polypeptide is Elongation factor P (efp) (Helicobacter pylori (strain J99 / ATCC 700824) (Campylobacter pylori J99)).